Here is a 742-residue protein sequence, read N- to C-terminus: Mechanosensitive ion channel protein 9 (742 aa).

The disordered stretch occupies residues 1 to 117; that stretch reads MAERRVSNGE…REENGGRSLR (117 aa). The span at 17–26 shows a compositional bias: basic and acidic residues; it reads SDKEDSKDPR. Ser28 and Ser36 each carry phosphoserine. Over residues 105–117 the composition is skewed to basic and acidic residues; sequence DSTREENGGRSLR. Residues Ser142 and Ser145 each carry the phosphoserine modification. 6 consecutive transmembrane segments (helical) span residues 180 to 200, 221 to 241, 261 to 281, 292 to 312, 524 to 544, and 559 to 579; these read AFLE…SLTI, MVTL…VFII, NVQV…LFDG, FLDF…LFLV, LITG…LDIA, and LAFM…FVFV.

The protein belongs to the MscS (TC 1.A.23) family. Detected in the epidermis, cortex, and endodermis of the root tip.

Its subcellular location is the cell membrane. Its function is as follows. Mechanosensitive channel that opens in response to stretch forces in the membrane lipid bilayer. This Arabidopsis thaliana (Mouse-ear cress) protein is Mechanosensitive ion channel protein 9 (MSL9).